Reading from the N-terminus, the 308-residue chain is Zinc transporter ZIP9 (308 aa).

The helical transmembrane segment at 4–24 (FLSISLLSVAMLVGCYVAGII) threads the bilayer. N-linked (GlcNAc...) asparagine glycosylation occurs at N29. The next 5 helical transmembrane spans lie at 35-55 (LKLVTVLGAGLLCGTALAVIV), 107-127 (AYIGVSLVLGFVFMLLVDQIG), 147-167 (ITTTLGLVVHAAADGVALGAA), 177-197 (LIVFVAIMLHKAPAAFGLVSF), and 211-231 (HLLVFALAAPAMSMLTYLGLS). N-linked (GlcNAc...) asparagine glycosylation occurs at N242. 2 helical membrane passes run 245–265 (GVAMLFSAGTFLYVATVHVLP) and 287–307 (LEVAALVLGCLIPLILSIGHQ).

Belongs to the ZIP transporter (TC 2.A.5) family.

It localises to the golgi apparatus. Its subcellular location is the trans-Golgi network membrane. It is found in the cell membrane. The protein localises to the cytoplasm. The protein resides in the perinuclear region. It localises to the mitochondrion. Its subcellular location is the nucleus. It catalyses the reaction Zn(2+)(in) = Zn(2+)(out). Transports zinc ions across cell and organelle membranes into the cytoplasm and regulates intracellular zinc homeostasis. Participates in the zinc ions efflux out of the secretory compartments. Regulates intracellular zinc level, resulting in the enhancement of AKT1 and MAPK3/MAPK1 (Erk1/2) phosphorylation in response to the BCR activation. Also functions as a membrane androgen receptor that mediates, through a G protein, the non-classical androgen signaling pathway, characterized by the activation of MAPK3/MAPK1 (Erk1/2) and transcription factors CREB1 or ATF1. This pathway contributes to CLDN1 and CLDN5 expression and tight junction formation between adjacent Sertoli cells. Mediates androgen-induced vascular endothelial cell proliferation through activation of an inhibitory G protein leading to the AKT1 and MAPK3/MAPK1 (Erk1/2) activation which in turn modulate inhibition (phosphorylation) of GSK3B and CCND1 transcription. Moreover, has dual functions as a membrane-bound androgen receptor and as an androgen-dependent zinc transporter both of which are mediated through an inhibitory G protein (Gi) that mediates both MAP kinase and zinc signaling leading to the androgen-dependent apoptotic process. The protein is Zinc transporter ZIP9 of Mus musculus (Mouse).